Reading from the N-terminus, the 646-residue chain is Long-chain fatty acid transport protein 1 (646 aa).

The Extracellular portion of the chain corresponds to 1 to 13; that stretch reads MRAPGAGTASVAS. The helical transmembrane segment at 14–34 threads the bilayer; sequence LALLWFLGLPWTWSAAAAFCV. At 35 to 646 the chain is on the cytoplasmic side; sequence YVGGGGWRFL…ARICAGDFSL (612 aa). Residues 191-475 are sufficient for oligomerization; the sequence is EVSEQLGKSL…YVSDSATNKK (285 aa). Position 246-257 (246-257) interacts with AMP; it reads YIYTSGTTGLPK.

This sequence belongs to the ATP-dependent AMP-binding enzyme family. As to quaternary structure, self-associates. May function as a homodimer. Interacts with EPRS1; mediates the translocation of SLC27A1 from the cytoplasm to the plasma membrane thereby increasing the uptake of long-chain fatty acids. Interacts with DGAT2 and this interaction is enhanced in the presence of ZFYVE1. As to expression, higher expression in white adipose tissue than in heart. Highest expression in skeletal muscle, heart and fat. Lower levels in brain, kidney, lung, liver and testis. No expression in spleen or intestine.

It localises to the cell membrane. It is found in the mitochondrion outer membrane. Its subcellular location is the endomembrane system. The protein resides in the cytoplasm. It catalyses the reaction a fatty acid(in) = a fatty acid(out). The catalysed reaction is (9Z)-octadecenoate(out) = (9Z)-octadecenoate(in). It carries out the reaction hexadecanoate(out) = hexadecanoate(in). The enzyme catalyses (5Z,8Z,11Z,14Z)-eicosatetraenoate(out) = (5Z,8Z,11Z,14Z)-eicosatetraenoate(in). It catalyses the reaction (9Z,12Z)-octadecadienoate(out) = (9Z,12Z)-octadecadienoate(in). The catalysed reaction is a long-chain fatty acid + ATP + CoA = a long-chain fatty acyl-CoA + AMP + diphosphate. It carries out the reaction (5Z,8Z,11Z,14Z)-eicosatetraenoate + ATP + CoA = (5Z,8Z,11Z,14Z)-eicosatetraenoyl-CoA + AMP + diphosphate. The enzyme catalyses a very long-chain fatty acid + ATP + CoA = a very long-chain fatty acyl-CoA + AMP + diphosphate. It catalyses the reaction tetracosanoate + ATP + CoA = tetracosanoyl-CoA + AMP + diphosphate. With respect to regulation, inhibited by Triacsin C. Both insulin and muscle contraction stimulate translocation to the plasma membrane in muscle, increasing fatty acid transport activity. Functionally, mediates the import of long-chain fatty acids (LCFA) into the cell by facilitating their transport at the plasma membrane. Also functions as an acyl-CoA ligase catalyzing the ATP-dependent formation of fatty acyl-CoA using LCFA and very-long-chain fatty acids (VLCFA) as substrates, which prevents fatty acid efflux from cells and might drive more fatty acid uptake. May act directly as a bona fide transporter, or alternatively, in a cytoplasmic or membrane-associated multimeric protein complex to trap and draw fatty acids towards accumulation. Plays a pivotal role in regulating available LCFA substrates from exogenous sources in tissues undergoing high levels of beta-oxidation or triglyceride synthesis. May be involved in regulation of cholesterol metabolism. Probably involved in fatty acid transport across the blood barrier. The polypeptide is Long-chain fatty acid transport protein 1 (Mus musculus (Mouse)).